The primary structure comprises 274 residues: MANFTTENELEDILHQMGHHIHDKNQFATFKNEIDNLLDRELCLSDADEDVMNESLFASLSVDPAAQFIRQERNFPTENLNIQSPIVSRKRQGKRFIYENVELQSDFDDESSNEYPERNLLVDRAWRSIHRAMETCNGATETLKSISLDGSDIQERSSVDDEENIAESVSVGLSTETEQSELQKSSRPEKEVWTRNVLSLEPGRAPKKYDPVTRYHFYKSEWDRHPAPGEMRRLSLRWKVREFMLRHDVPRLNENNEDWKANHDKDWSPRPYID.

Disordered regions lie at residues 156–188 (RSSV…SSRP) and 255–274 (NNED…PYID). The span at 171-183 (VGLSTETEQSELQ) shows a compositional bias: polar residues. The segment covering 257–274 (EDWKANHDKDWSPRPYID) has biased composition (basic and acidic residues).

The protein belongs to the HYLS1 family. As to quaternary structure, interacts with sas-4; leading to its localization into newly forming centrioles.

The protein resides in the cytoplasm. It localises to the cytoskeleton. Its subcellular location is the microtubule organizing center. It is found in the centrosome. The protein localises to the centriole. The protein resides in the cell projection. It localises to the cilium. Its function is as follows. Plays an important role in ciliogenesis. This is Centriolar and ciliogenesis-associated protein hyls-1 from Caenorhabditis elegans.